The chain runs to 511 residues: Maturase K (511 aa).

This sequence belongs to the intron maturase 2 family. MatK subfamily.

It is found in the plastid. It localises to the chloroplast. Usually encoded in the trnK tRNA gene intron. Probably assists in splicing its own and other chloroplast group II introns. The sequence is that of Maturase K from Poa pratensis (Kentucky bluegrass).